We begin with the raw amino-acid sequence, 156 residues long: Small ribosomal subunit protein uS7 (156 aa).

Belongs to the universal ribosomal protein uS7 family. As to quaternary structure, part of the 30S ribosomal subunit. Contacts proteins S9 and S11.

Its function is as follows. One of the primary rRNA binding proteins, it binds directly to 16S rRNA where it nucleates assembly of the head domain of the 30S subunit. Is located at the subunit interface close to the decoding center, probably blocks exit of the E-site tRNA. The polypeptide is Small ribosomal subunit protein uS7 (Solidesulfovibrio magneticus (strain ATCC 700980 / DSM 13731 / RS-1) (Desulfovibrio magneticus)).